Here is a 413-residue protein sequence, read N- to C-terminus: Coiled-coil domain-containing protein 83 (413 aa).

The segment at M1–K21 is disordered. Residues N8 to K21 are compositionally biased toward basic and acidic residues. 2 coiled-coil regions span residues E37 to I184 and W216 to C256.

This chain is Coiled-coil domain-containing protein 83 (CCDC83), found in Homo sapiens (Human).